Here is a 137-residue protein sequence, read N- to C-terminus: Large ribosomal subunit protein uL16 (137 aa).

It belongs to the universal ribosomal protein uL16 family. As to quaternary structure, part of the 50S ribosomal subunit.

Its function is as follows. Binds 23S rRNA and is also seen to make contacts with the A and possibly P site tRNAs. The sequence is that of Large ribosomal subunit protein uL16 from Paracoccus denitrificans (strain Pd 1222).